The primary structure comprises 204 residues: Ras-related protein Rab-1D (204 aa).

GTP contacts are provided by residues G17–C25, W35–T42, D65–Q69, N123–D126, and S153–K155. Positions H39–F47 match the Effector region motif. Residues P182–S191 are compositionally biased toward basic and acidic residues. The segment at P182–C204 is disordered. Positions K192 to C204 are enriched in basic residues. C204 carries S-geranylgeranyl cysteine lipidation.

The protein belongs to the small GTPase superfamily. Rab family.

It is found in the cell membrane. This is Ras-related protein Rab-1D (rab1D) from Dictyostelium discoideum (Social amoeba).